Consider the following 484-residue polypeptide: Glutamyl-tRNA(Gln) amidotransferase subunit A (484 aa).

Catalysis depends on charge relay system residues lysine 76 and serine 151. The active-site Acyl-ester intermediate is the serine 175.

Belongs to the amidase family. GatA subfamily. As to quaternary structure, heterotrimer of A, B and C subunits.

It catalyses the reaction L-glutamyl-tRNA(Gln) + L-glutamine + ATP + H2O = L-glutaminyl-tRNA(Gln) + L-glutamate + ADP + phosphate + H(+). Allows the formation of correctly charged Gln-tRNA(Gln) through the transamidation of misacylated Glu-tRNA(Gln) in organisms which lack glutaminyl-tRNA synthetase. The reaction takes place in the presence of glutamine and ATP through an activated gamma-phospho-Glu-tRNA(Gln). The polypeptide is Glutamyl-tRNA(Gln) amidotransferase subunit A (Cellvibrio japonicus (strain Ueda107) (Pseudomonas fluorescens subsp. cellulosa)).